The sequence spans 198 residues: Sporulation-specific protein 16 (198 aa).

Necessary for efficient spore formation. This Saccharomyces cerevisiae (strain ATCC 204508 / S288c) (Baker's yeast) protein is Sporulation-specific protein 16 (SPO16).